Reading from the N-terminus, the 449-residue chain is UDP-N-acetylmuramoylalanine--D-glutamate ligase (449 aa).

Position 117–123 (Gly117–Thr123) interacts with ATP.

This sequence belongs to the MurCDEF family.

The protein localises to the cytoplasm. The catalysed reaction is UDP-N-acetyl-alpha-D-muramoyl-L-alanine + D-glutamate + ATP = UDP-N-acetyl-alpha-D-muramoyl-L-alanyl-D-glutamate + ADP + phosphate + H(+). Its pathway is cell wall biogenesis; peptidoglycan biosynthesis. Cell wall formation. Catalyzes the addition of glutamate to the nucleotide precursor UDP-N-acetylmuramoyl-L-alanine (UMA). The protein is UDP-N-acetylmuramoylalanine--D-glutamate ligase of Exiguobacterium sibiricum (strain DSM 17290 / CCUG 55495 / CIP 109462 / JCM 13490 / 255-15).